Here is a 74-residue protein sequence, read N- to C-terminus: Insertion element IS986 uncharacterized 8.2 kDa protein (74 aa).

The polypeptide is Insertion element IS986 uncharacterized 8.2 kDa protein (Mycobacterium tuberculosis).